The following is a 67-amino-acid chain: Medusin-PT (67 aa).

The N-terminal stretch at 1 to 22 (MAFLKKSLFLVFFLGFVSLSIC) is a signal peptide. Residues 23–48 (EEEKRETDEKENEQEDDREERSEEKR) constitute a propeptide that is removed on maturation. Residues 25-46 (EKRETDEKENEQEDDREERSEE) form a disordered region. Positions 31–40 (EKENEQEDDR) are enriched in acidic residues. Leu66 bears the Leucine amide mark.

This sequence belongs to the frog skin active peptide (FSAP) family. Medusin subfamily. Post-translationally, in the synthetic mutant medusin-PT1a [T58K], the Leu-50 has been modified in a D-amino acid. In medusin-PT1a, there is an increase in antimicrobial activity, and an increase in hemolytic activity. It is more potent against S.aureus and gains activity against MRSA, E.faecalis, E.coli, P.aeruginosa and C.albicans. There is an important increase in both biofilm inhibition and biofilm eradication. As to expression, expressed by the skin glands.

The protein localises to the secreted. The protein resides in the target cell membrane. In terms of biological role, antimicrobial peptide with activity against Gram-positive bacteria S.epidermidis ATCC 12228 (MIC=50 uM) and S.aureus (MIC=64 ug/ml and MBC=128 ug/ml). Not active against some Gram-positive bacteria (methicillin-resistant S.aureus (MRSA), E.faecalis), Gram-negative bacterium E.coli ATCC 25922 and fungus C.albicans at concentrations up to 100 uM. Can only slightly inhibit the formation of biofilm by S.aureus (minimal biofilm inhibitionconcentration MBIC=512 ug/ml, minimal biofilm eradication concentration MBEC&gt;512 ug/ml). Has an anti-inflammatory effect, since it inhibits the production of the pro-inflammatory cytokines TNF-alpha and IL-1beta. Has high activity of stimulation of insulin release, which may protect the species from being eaten by predators by causing fatal hypoglycemia. Is not cytotoxic to cancer line cells. Shows very low hemolysis on horse erythrocytes and moderate hemolysis on mouse erythrocytes. In Phyllomedusa tarsius (Brownbelly leaf frog), this protein is Medusin-PT.